The chain runs to 144 residues: Transcription antitermination protein NusB (144 aa).

It belongs to the NusB family.

Its function is as follows. Involved in transcription antitermination. Required for transcription of ribosomal RNA (rRNA) genes. Binds specifically to the boxA antiterminator sequence of the ribosomal RNA (rrn) operons. This is Transcription antitermination protein NusB from Pelotomaculum thermopropionicum (strain DSM 13744 / JCM 10971 / SI).